A 124-amino-acid chain; its full sequence is Small ribosomal subunit protein uS12 (124 aa).

At D89 the chain carries 3-methylthioaspartic acid.

Belongs to the universal ribosomal protein uS12 family. Part of the 30S ribosomal subunit. Contacts proteins S8 and S17. May interact with IF1 in the 30S initiation complex.

With S4 and S5 plays an important role in translational accuracy. Its function is as follows. Interacts with and stabilizes bases of the 16S rRNA that are involved in tRNA selection in the A site and with the mRNA backbone. Located at the interface of the 30S and 50S subunits, it traverses the body of the 30S subunit contacting proteins on the other side and probably holding the rRNA structure together. The combined cluster of proteins S8, S12 and S17 appears to hold together the shoulder and platform of the 30S subunit. This chain is Small ribosomal subunit protein uS12, found in Leptospira biflexa serovar Patoc (strain Patoc 1 / Ames).